The sequence spans 1137 residues: MFDCWRFILCKRPGSNSYSSPQRPNEAKKEETDHQIDVSDVIRLVQDTPEATAMATDEIMHQDIVPLCAADIQDQLKKRFAYLSGGRGQDGSPVITFPDYPAFSEIPDKEFQNVMTYLTSIPSLQDAGIGFILVIDRRRDKWTSVKASVLRIAASFPANLQLVLVLRPTGFFQRTLSDIAFKFNRDDFKMKVPVIMLSSVPDLHGYIDKSQLTEDLGGTLDYCHSRWLCQRTAIESFALMVKQTAQMLQSFGTELAETELPNDVQSTSSVLCAHTEKKDKAKEDLRLALKEGHSVLESLRELQAEGSEPSVNQDQLDNQATVQRLLAQLNETEAAFDEFWAKHQQKLEQCLQLRHFEQGFREVKAILDAASQKIATFTDIGNSLAHVEHLLRDLASFEEKSGVAVERARALSLDGEQLIGNKHYAVDSIRPKCQELRHLCDQFSAEIARRRGLLSKSLELHRRLETSMKWCDEGIYLLASQPVDKCQSQDGAEAALQEIEKFLETGAENKIQELNAIYKEYESILNQDLMEHVRKVFQKQASMEEVFHRRQASLKKLAARQTRPVQPVAPRPEALAKSPCPSPGIRRGSENSSSEGGALRRGPYRRAKSEMSESRQGRGSAGEEEESLAILRRHVMSELLDTERAYVEELLCVLEGYAAEMDNPLMAHLLSTGLHNKKDVLFGNMEEIYHFHNRIFLRELENYTDCPELVGRCFLERMEDFQIYEKYCQNKPRSESLWRQCSDCPFFQECQRKLDHKLSLDSYLLKPVQRITKYQLLLKEMLKYSRNCEGAEDLQEALSSILGILKAVNDSMHLIAITGYDGNLGDLGKLLMQGSFSVWTDHKRGHTKVKELARFKPMQRHLFLHEKAVLFCKKREENGEGYEKAPSYSYKQSLNMAAVGITENVKGDAKKFEIWYNAREEVYIVQAPTPEIKAAWVNEIRKVLTSQLQACREASQHRALEQSQSLPLPAPTSTSPSRGNSRNIKKLEERKTDPLSLEGYVSSAPLTKPPEKGKGWSKTSHSLEAPEDDGGWSSAEEQINSSDAEEDGGLGPKKLVPGKYTVVADHEKGGPDALRVRSGDVVELVQEGDEGLWYVRDPTTGKEGWVPASSLSVRLGPSGSAQCLSSSGKAHVPRAHP.

Residues 52–224 form the CRAL-TRIO domain; it reads TAMATDEIMH…DLGGTLDYCH (173 aa). The Spectrin repeat unit spans residues 351–456; it reads LQLRHFEQGF…IARRRGLLSK (106 aa). Residues serine 457 and serine 480 each carry the phosphoserine modification. The stretch at 503–529 forms a coiled coil; it reads LETGAENKIQELNAIYKEYESILNQDL. Residues 557–625 are disordered; the sequence is LAARQTRPVQ…QGRGSAGEEE (69 aa). The segment covering 584–597 has biased composition (low complexity); sequence GIRRGSENSSSEGG. The span at 607–616 shows a compositional bias: basic and acidic residues; sequence AKSEMSESRQ. Position 620 is a phosphoserine (serine 620). In terms of domain architecture, DH spans 631-811; sequence LRRHVMSELL…LGILKAVNDS (181 aa). Positions 829-945 constitute a PH domain; it reads KLLMQGSFSV…WVNEIRKVLT (117 aa). Disordered regions lie at residues 955–1058 and 1116–1137; these read SQHR…LVPG and GPSG…RAHP. The span at 962–977 shows a compositional bias: low complexity; that stretch reads QSQSLPLPAPTSTSPS. Serine 1033, serine 1034, serine 1041, and serine 1042 each carry phosphoserine. The SH3 domain maps to 1055–1116; the sequence is LVPGKYTVVA…PASSLSVRLG (62 aa). A compositionally biased stretch (polar residues) spans 1119–1128; the sequence is GSAQCLSSSG.

This sequence belongs to the MCF2 family. As to quaternary structure, interacts with GTP-bound RAC1. Interacts with CDC42. Interacts with RHOA. Interacts with CCPG1, which results in specific inhibition of its exchange activity toward RHOA, but does not affect its activity on CDC42.

It is found in the cytoplasm. The protein resides in the cell membrane. Its subcellular location is the endomembrane system. In terms of biological role, guanine nucleotide exchange factor that catalyzes guanine nucleotide exchange on RHOA and CDC42, and thereby contributes to the regulation of RHOA and CDC42 signaling pathways. Seems to lack activity with RAC1. Becomes activated and highly tumorigenic by truncation of the N-terminus. Isoform 5 activates CDC42. Does not catalyze guanine nucleotide exchange on CDC42. The protein is Guanine nucleotide exchange factor DBS (MCF2L) of Homo sapiens (Human).